The chain runs to 486 residues: Putative ankyrin repeat protein R634 (486 aa).

12 ANK repeats span residues 84–113, 114–143, 145–173, 174–203, 205–233, 234–263, 265–293, 307–336, 337–366, 367–396, 398–426, and 427–456; these read DLFK…NVRE, HNDV…DLYA, KNTL…NFRE, NCDT…DVNS, SHKS…NIDW, RHNY…NLEI, DGCI…EIGF, NKIT…ATIK, EKNY…SLEK, KINK…NVKT, EGLP…DVTS, and YDNY…NVND.

The protein is Putative ankyrin repeat protein R634 of Acanthamoeba polyphaga (Amoeba).